A 614-amino-acid chain; its full sequence is UPF0329 protein ECU03_0090 (614 aa).

Basic and acidic residues-rich tracts occupy residues 317–338 and 345–354; these read EREEAEKMRGEEERRKKEEESL and LRMEEKEKSK. Positions 317-420 are disordered; it reads EREEAEKMRG…KKSRSKGHRY (104 aa). Over residues 355-364 the composition is skewed to basic residues; the sequence is SRGKKKKGGK. A compositionally biased stretch (basic and acidic residues) spans 372-381; the sequence is AKMEEEKKDS. Acidic residues predominate over residues 382–394; sequence EEVEESAEAEVSL. Residues 408-420 show a composition bias toward basic residues; it reads SSKKKSRSKGHRY.

Belongs to the UPF0329 family.

The polypeptide is UPF0329 protein ECU03_0090 (Encephalitozoon cuniculi (strain GB-M1) (Microsporidian parasite)).